The chain runs to 144 residues: uncharacterized protein (144 aa).

Residues 1-58 (MDLASLNAFIAVAETGSFSEAGERLHLTQPAVSKRIAALEQQLQVRLFDRLGREVRLT) enclose the HTH lysR-type domain. The segment at residues 18–38 (FSEAGERLHLTQPAVSKRIAA) is a DNA-binding region (H-T-H motif).

It belongs to the LysR transcriptional regulatory family.

This is an uncharacterized protein from Azotobacter vinelandii.